Consider the following 353-residue polypeptide: tRNA N6-adenosine threonylcarbamoyltransferase (353 aa).

Fe cation contacts are provided by His-119 and His-123. Residues 145–149 (LVSGG), Asp-178, Gly-191, and Asn-285 contribute to the substrate site. Position 313 (Asp-313) interacts with Fe cation.

This sequence belongs to the KAE1 / TsaD family. Fe(2+) serves as cofactor.

The protein localises to the cytoplasm. It carries out the reaction L-threonylcarbamoyladenylate + adenosine(37) in tRNA = N(6)-L-threonylcarbamoyladenosine(37) in tRNA + AMP + H(+). Functionally, required for the formation of a threonylcarbamoyl group on adenosine at position 37 (t(6)A37) in tRNAs that read codons beginning with adenine. Is involved in the transfer of the threonylcarbamoyl moiety of threonylcarbamoyl-AMP (TC-AMP) to the N6 group of A37, together with TsaE and TsaB. TsaD likely plays a direct catalytic role in this reaction. In Magnetococcus marinus (strain ATCC BAA-1437 / JCM 17883 / MC-1), this protein is tRNA N6-adenosine threonylcarbamoyltransferase.